The sequence spans 485 residues: Protein adenylyltransferase Fic (485 aa).

Residues 21–43 (YRFVLFFIAGSLAAFAFHALTSS) traverse the membrane as a helical segment. TPR repeat units lie at residues 107–140 (AMGALRLAQEMYMAGKDDKAARLFEHALALAPKH) and 141–175 (PEVLLRYGEFLEHNQRNIVLADQYYFQALCISPSN). Positions 232 to 237 (SVGIEG) match the Inhibitory (S/T)XXXE(G/N) motif motif. Residues Glu236 and 317–320 (VGGH) each bind ATP. In terms of domain architecture, Fido spans 286 to 421 (ITLKDILELH…IRPFVRFIAD (136 aa)). His364 is an active-site residue. ATP-binding positions include 368 to 375 (DGNGRTSR), 400 to 401 (YY), and Asn408.

It belongs to the fic family. In terms of assembly, homodimer.

It is found in the membrane. It carries out the reaction L-tyrosyl-[protein] + ATP = O-(5'-adenylyl)-L-tyrosyl-[protein] + diphosphate. The catalysed reaction is L-threonyl-[protein] + ATP = 3-O-(5'-adenylyl)-L-threonyl-[protein] + diphosphate. The enzyme catalyses 3-O-(5'-adenylyl)-L-threonyl-[protein] + H2O = L-threonyl-[protein] + AMP + H(+). The side chain of Glu-236 determines which of the two opposing activities (AMPylase or de-AMPylase) will take place. In response to endoplasmic reticulum stress, mediates de-AMPylase activity. Adenylyltransferase activity is inhibited by the inhibitory helix present at the N-terminus: Glu-236 binds ATP and competes with ATP-binding at Arg-375, thereby preventing adenylyltransferase activity. In unstressed cells, disengagement of Glu-236 promotes adenylyltransferase activity. Activation dissociates ATP-binding from Glu-236, allowing ordered binding of the entire ATP moiety with the alpha-phosphate in an orientation that is productive for accepting an incoming target hydroxyl side chain. Its function is as follows. Protein that can both mediate the addition of adenosine 5'-monophosphate (AMP) to specific residues of target proteins (AMPylation), and the removal of the same modification from target proteins (de-AMPylation), depending on the context. The side chain of Glu-236 determines which of the two opposing activities (AMPylase or de-AMPylase) will take place. Acts as a key regulator of the unfolded protein response (UPR) by mediating AMPylation or de-AMPylation of Hsc70-3/BiP. In unstressed cells, acts as an adenylyltransferase by mediating AMPylation of Hsc70-3/BiP at 'Thr-518', thereby inactivating it. In response to endoplasmic reticulum stress, acts as a phosphodiesterase by mediating removal of ATP (de-AMPylation) from Hsc70-3/BiP at 'Thr-518', leading to restore HSPA5/BiP activity. This Drosophila virilis (Fruit fly) protein is Protein adenylyltransferase Fic.